A 270-amino-acid polypeptide reads, in one-letter code: Mediator of RNA polymerase II transcription subunit 4 (270 aa).

Positions 1 to 25 are disordered; that stretch reads MAAASSGEKEKERPGGGLGAAGGNS. Position 2 is an N-acetylalanine (Ala-2). 2 coiled-coil regions span residues 24–48 and 90–131; these read NSTRERLLSALEDLEVLSRELIEML and HHEM…AKEK. Ser-32 is modified (phosphoserine). Residues 231–270 form a disordered region; it reads MLPPNHSHDFLLEPPGHNKENEDDVEVMSTDSSSSSSDSD. Residues 236 to 250 are compositionally biased toward basic and acidic residues; that stretch reads HSHDFLLEPPGHNKE. A compositionally biased stretch (low complexity) spans 259-270; that stretch reads STDSSSSSSDSD.

The protein belongs to the Mediator complex subunit 4 family. Component of the Mediator complex, which is composed of MED1, MED4, MED6, MED7, MED8, MED9, MED10, MED11, MED12, MED13, MED13L, MED14, MED15, MED16, MED17, MED18, MED19, MED20, MED21, MED22, MED23, MED24, MED25, MED26, MED27, MED29, MED30, MED31, CCNC, CDK8 and CDC2L6/CDK11. The MED12, MED13, CCNC and CDK8 subunits form a distinct module termed the CDK8 module. Mediator containing the CDK8 module is less active than Mediator lacking this module in supporting transcriptional activation. Individual preparations of the Mediator complex lacking one or more distinct subunits have been variously termed ARC, CRSP, DRIP, PC2, SMCC and TRAP.

It is found in the nucleus. Its function is as follows. Component of the Mediator complex, a coactivator involved in the regulated transcription of nearly all RNA polymerase II-dependent genes. Mediator functions as a bridge to convey information from gene-specific regulatory proteins to the basal RNA polymerase II transcription machinery. Mediator is recruited to promoters by direct interactions with regulatory proteins and serves as a scaffold for the assembly of a functional preinitiation complex with RNA polymerase II and the general transcription factors. In Bos taurus (Bovine), this protein is Mediator of RNA polymerase II transcription subunit 4 (MED4).